The following is a 558-amino-acid chain: UvrABC system protein C (558 aa).

The region spanning 12–92 (LLPGVYIFYG…IFNHKPKYNV (81 aa)) is the GIY-YIG domain. Residues 200–235 (SETLDLIEEKMKKHAKMMDFENAAKYRDLLVKFENV) form the UVR domain.

This sequence belongs to the UvrC family. As to quaternary structure, interacts with UvrB in an incision complex.

The protein resides in the cytoplasm. Functionally, the UvrABC repair system catalyzes the recognition and processing of DNA lesions. UvrC both incises the 5' and 3' sides of the lesion. The N-terminal half is responsible for the 3' incision and the C-terminal half is responsible for the 5' incision. The sequence is that of UvrABC system protein C from Pseudothermotoga lettingae (strain ATCC BAA-301 / DSM 14385 / NBRC 107922 / TMO) (Thermotoga lettingae).